The chain runs to 82 residues: Small ribosomal subunit protein bS16 (82 aa).

Belongs to the bacterial ribosomal protein bS16 family.

This Enterobacter sp. (strain 638) protein is Small ribosomal subunit protein bS16.